The chain runs to 151 residues: Small ribosomal subunit protein uS11A (151 aa).

The tract at residues 131–151 is disordered; it reads DVTPIPSDSTRRKGGRRGRRL. The span at 142 to 151 shows a compositional bias: basic residues; sequence RKGGRRGRRL.

It belongs to the universal ribosomal protein uS11 family.

This is Small ribosomal subunit protein uS11A from Drosophila melanogaster (Fruit fly).